A 483-amino-acid polypeptide reads, in one-letter code: ATP-dependent RNA helicase DDX25 (483 aa).

Residues 61 to 74 (LAANSLLNKLIHQS) carry the Nuclear export signal motif. Residues 97 to 125 (KTFEELRLKEELLKGIYAMGFNRPSKIQE) carry the Q motif motif. Residues 100–114 (EELRLKEELLKGIYA) carry the Nuclear localization signal motif. One can recognise a Helicase ATP-binding domain in the interval 130–300 (MMLAHPPQNL…ERIIPDPNVI (171 aa)). 143–150 (SQSGTGKT) is a binding site for ATP. Residues 247–250 (DEAD) carry the DEAD box motif. Residues 311 to 478 (NIRQYYVLCE…QLNAEDMDEI (168 aa)) enclose the Helicase C-terminal domain.

It belongs to the DEAD box helicase family. Phosphorylated on threonine residues. The phosphorylated form is found in the cytoplasm but not in the nucleus. As to expression, highly expressed in the Leydig and germ cells of the testis and weakly expressed in the pituitary and hypothalamus.

Its subcellular location is the cytoplasm. The protein localises to the nucleus. The enzyme catalyses ATP + H2O = ADP + phosphate + H(+). Functionally, ATP-dependent RNA helicase. Required for mRNA export and translation regulation during spermatid development. In Homo sapiens (Human), this protein is ATP-dependent RNA helicase DDX25 (DDX25).